The sequence spans 365 residues: Peptide chain release factor 2 (365 aa).

Gln-252 bears the N5-methylglutamine mark.

It belongs to the prokaryotic/mitochondrial release factor family. In terms of processing, methylated by PrmC. Methylation increases the termination efficiency of RF2.

It localises to the cytoplasm. Functionally, peptide chain release factor 2 directs the termination of translation in response to the peptide chain termination codons UGA and UAA. This is Peptide chain release factor 2 from Aliivibrio fischeri (strain ATCC 700601 / ES114) (Vibrio fischeri).